A 202-amino-acid chain; its full sequence is Cilia- and flagella-associated protein 418 (202 aa).

The interval 71–90 is disordered; that stretch reads DVDTPTSTHEPSPAKASSSA. The span at 74 to 90 shows a compositional bias: polar residues; sequence TPTSTHEPSPAKASSSA.

Ubiquitously expressed during early development and in adult tissues including the eye, brain, heart and kidney.

The protein localises to the cytoplasm. Its subcellular location is the photoreceptor inner segment. Its function is as follows. May be involved in photoreceptor outer segment disk morphogenesis. This Danio rerio (Zebrafish) protein is Cilia- and flagella-associated protein 418 (cfap418).